Consider the following 329-residue polypeptide: Beta-ketoacyl-[acyl-carrier-protein] synthase III (329 aa).

Catalysis depends on residues cysteine 123 and histidine 256. Residues 257-261 (QANIR) are ACP-binding. Asparagine 286 is a catalytic residue.

It belongs to the thiolase-like superfamily. FabH family. As to quaternary structure, homodimer.

The protein localises to the cytoplasm. The enzyme catalyses malonyl-[ACP] + acetyl-CoA + H(+) = 3-oxobutanoyl-[ACP] + CO2 + CoA. It participates in lipid metabolism; fatty acid biosynthesis. Functionally, catalyzes the condensation reaction of fatty acid synthesis by the addition to an acyl acceptor of two carbons from malonyl-ACP. Catalyzes the first condensation reaction which initiates fatty acid synthesis and may therefore play a role in governing the total rate of fatty acid production. Possesses both acetoacetyl-ACP synthase and acetyl transacylase activities. Its substrate specificity determines the biosynthesis of branched-chain and/or straight-chain of fatty acids. The polypeptide is Beta-ketoacyl-[acyl-carrier-protein] synthase III (Burkholderia cenocepacia (strain HI2424)).